Consider the following 227-residue polypeptide: Cytochrome c oxidase subunit 2 (227 aa).

Residues 1–14 (MAHPAQLGFQDAAS) are Mitochondrial intermembrane-facing. A helical transmembrane segment spans residues 15-45 (PIMEELMYFHDHTLMIVFLISSLVLYIISLM). Over 46 to 59 (LTTELTHTSTMDAQ) the chain is Mitochondrial matrix. The helical transmembrane segment at 60-87 (EVETVWTILPAVILILIALPSLRILYMM) threads the bilayer. Topologically, residues 88-227 (DEITTPSLTL…HFEEWLLSTL (140 aa)) are mitochondrial intermembrane. Residues His161, Cys196, Glu198, Cys200, His204, and Met207 each contribute to the Cu cation site. A Mg(2+)-binding site is contributed by Glu198.

Belongs to the cytochrome c oxidase subunit 2 family. In terms of assembly, component of the cytochrome c oxidase (complex IV, CIV), a multisubunit enzyme composed of 14 subunits. The complex is composed of a catalytic core of 3 subunits MT-CO1, MT-CO2 and MT-CO3, encoded in the mitochondrial DNA, and 11 supernumerary subunits COX4I, COX5A, COX5B, COX6A, COX6B, COX6C, COX7A, COX7B, COX7C, COX8 and NDUFA4, which are encoded in the nuclear genome. The complex exists as a monomer or a dimer and forms supercomplexes (SCs) in the inner mitochondrial membrane with NADH-ubiquinone oxidoreductase (complex I, CI) and ubiquinol-cytochrome c oxidoreductase (cytochrome b-c1 complex, complex III, CIII), resulting in different assemblies (supercomplex SCI(1)III(2)IV(1) and megacomplex MCI(2)III(2)IV(2)). Found in a complex with TMEM177, COA6, COX18, COX20, SCO1 and SCO2. Interacts with TMEM177 in a COX20-dependent manner. Interacts with COX20. Interacts with COX16. The cofactor is Cu cation.

The protein localises to the mitochondrion inner membrane. The catalysed reaction is 4 Fe(II)-[cytochrome c] + O2 + 8 H(+)(in) = 4 Fe(III)-[cytochrome c] + 2 H2O + 4 H(+)(out). In terms of biological role, component of the cytochrome c oxidase, the last enzyme in the mitochondrial electron transport chain which drives oxidative phosphorylation. The respiratory chain contains 3 multisubunit complexes succinate dehydrogenase (complex II, CII), ubiquinol-cytochrome c oxidoreductase (cytochrome b-c1 complex, complex III, CIII) and cytochrome c oxidase (complex IV, CIV), that cooperate to transfer electrons derived from NADH and succinate to molecular oxygen, creating an electrochemical gradient over the inner membrane that drives transmembrane transport and the ATP synthase. Cytochrome c oxidase is the component of the respiratory chain that catalyzes the reduction of oxygen to water. Electrons originating from reduced cytochrome c in the intermembrane space (IMS) are transferred via the dinuclear copper A center (CU(A)) of subunit 2 and heme A of subunit 1 to the active site in subunit 1, a binuclear center (BNC) formed by heme A3 and copper B (CU(B)). The BNC reduces molecular oxygen to 2 water molecules using 4 electrons from cytochrome c in the IMS and 4 protons from the mitochondrial matrix. This is Cytochrome c oxidase subunit 2 (MT-CO2) from Microcebus tavaratra (Northern rufous mouse lemur).